We begin with the raw amino-acid sequence, 348 residues long: UDP-N-acetylglucosamine--N-acetylmuramyl-(pentapeptide) pyrophosphoryl-undecaprenol N-acetylglucosamine transferase (348 aa).

UDP-N-acetyl-alpha-D-glucosamine contacts are provided by residues 11-13, asparagine 120, arginine 161, serine 187, and glutamine 281; that span reads TGG.

This sequence belongs to the glycosyltransferase 28 family. MurG subfamily.

The protein localises to the cell inner membrane. The enzyme catalyses di-trans,octa-cis-undecaprenyl diphospho-N-acetyl-alpha-D-muramoyl-L-alanyl-D-glutamyl-meso-2,6-diaminopimeloyl-D-alanyl-D-alanine + UDP-N-acetyl-alpha-D-glucosamine = di-trans,octa-cis-undecaprenyl diphospho-[N-acetyl-alpha-D-glucosaminyl-(1-&gt;4)]-N-acetyl-alpha-D-muramoyl-L-alanyl-D-glutamyl-meso-2,6-diaminopimeloyl-D-alanyl-D-alanine + UDP + H(+). It participates in cell wall biogenesis; peptidoglycan biosynthesis. Its function is as follows. Cell wall formation. Catalyzes the transfer of a GlcNAc subunit on undecaprenyl-pyrophosphoryl-MurNAc-pentapeptide (lipid intermediate I) to form undecaprenyl-pyrophosphoryl-MurNAc-(pentapeptide)GlcNAc (lipid intermediate II). This is UDP-N-acetylglucosamine--N-acetylmuramyl-(pentapeptide) pyrophosphoryl-undecaprenol N-acetylglucosamine transferase from Crocosphaera subtropica (strain ATCC 51142 / BH68) (Cyanothece sp. (strain ATCC 51142)).